We begin with the raw amino-acid sequence, 685 residues long: Stromal interaction molecule 1 (685 aa).

The signal sequence occupies residues 1 to 22; the sequence is MDVCARLALWLLWGLLLHQGQS. The Extracellular segment spans residues 23–213; it reads LSHSHSEKNT…LLTRHNHLKD (191 aa). Residues 24–43 form a disordered region; the sequence is SHSHSEKNTGASSGATSEES. Residues 32–41 are compositionally biased toward low complexity; that stretch reads TGASSGATSE. EF-hand domains follow at residues 64-97 and 102-126; these read SFEAVRNIHKLMDDDANGDVDVEESDEFLREDLN and TVKHSTFHGEDKLISVEDLWKAWKS. 5 residues coordinate Ca(2+): aspartate 76, aspartate 78, asparagine 80, aspartate 82, and glutamate 87. 2 N-linked (GlcNAc...) asparagine glycosylation sites follow: asparagine 131 and asparagine 171. The SAM domain occupies 132 to 200; it reads WTVDEVIQWL…QLKALDTVLF (69 aa). A helical membrane pass occupies residues 214 to 234; the sequence is FMLVVSIVIGVGGCWFAYIQN. At 235–685 the chain is on the cytoplasmic side; that stretch reads RYSKEHMKKM…LKIFKKPLKK (451 aa). Residues 248-442 are a coiled coil; it reads LEGLHRAEQS…IEILCGFQIV (195 aa). Serine 257 is subject to Phosphoserine. Positions 344 to 442 are SOAR/CAD; the sequence is PEALQKWLQL…IEILCGFQIV (99 aa). The contributes to fast Ca(2+)-dependent inactivation of CRAC channels stretch occupies residues 475–483; it reads DDVDDMDEE. A compositionally biased stretch (low complexity) spans 490–499; it reads MQSPSLQSSV. A disordered region spans residues 490–541; it reads MQSPSLQSSVRQRLTEPQLGLGSQRDLTHSDSESSLHMSDRQRVAPKPPQMG. Threonine 504 is modified (phosphothreonine). Serine 512 bears the Phosphoserine mark. The span at 515-532 shows a compositional bias: basic and acidic residues; it reads DLTHSDSESSLHMSDRQR. At threonine 517 the chain carries Phosphothreonine. 11 positions are modified to phosphoserine: serine 519, serine 521, serine 523, serine 524, serine 567, serine 575, serine 602, serine 608, serine 618, serine 621, and serine 628. Residues 596 to 685 form a disordered region; that stretch reads LMELNPSVPP…LKIFKKPLKK (90 aa). Positions 608 to 620 are enriched in low complexity; it reads SPLLDSSHSLSPS. Positions 642-645 match the Microtubule tip localization signal motif; it reads TRIP. Acidic residues predominate over residues 655–666; sequence EEDNGSIGEETD. A Phosphoserine modification is found at serine 660. Position 665 is a phosphothreonine (threonine 665). Serine 668 is subject to Phosphoserine. A compositionally biased stretch (basic residues) spans 670-685; the sequence is GRKKFPLKIFKKPLKK. Positions 672–685 are required for generation of inwardly rectifying CRAC currents; that stretch reads KKFPLKIFKKPLKK.

Monomer in the presence of Ca(2+). It oligomerizes in absence of Ca(2+). Forms homooligomers and heterooligomers with STIM2. Interacts with pore-forming subunits of CRAC channels, ORAI1, ORAI2 and ORAI3; this interaction is potentiated upon Ca(2+) store depletion. Interacts (via the transmembrane region and the SOAR/CAD domain) with SPPL3; the interaction promotes the binding of STIM1 to ORAI1. Interacts with ORAI1. Interacts with MAPRE1; probably required for targeting to the growing microtubule plus ends. Interacts with CRACR2A/EFCAB4B; the interaction is direct and takes place in absence of Ca(2+). Forms a complex with CRACR2A/EFCAB4B and ORAI1 at low concentration of Ca(2+), the complex dissociates at elevated Ca(2+) concentrations. Interacts with SARAF, promoting a slow inactivation of STIM1-dependent SOCE activity, possibly by facilitating the deoligomerization of STIM1. Interacts with EFHB; the interaction takes place upon Ca(2+)-store depletion and inhibits the association with SARAF. Interacts with ASPH. Interacts with SLC35G1; intracellular Ca(2+)-dependent. May interact with ATP1A1, ATP2A2, ATP2B1, ATP2B4, KPNB1 and XPO1; through SLC35G1. Interacts with STIMATE, promoting STIM1 conformational switch. Interacts with TMEM178A. Interacts with CASQ1 (via C-terminal end and preferentially with the monomeric form); this interaction increases in response to a depletion of intracellular Ca(2+), decreases both STIM1 aggregation and clustering, interaction of STIM1 with ORAI1 and store-operated Ca(2+) entry (SOCE) activity. Interacts with ADCY8. Interacts with TMEM203. Post-translationally, glycosylation is required for cell surface expression. Phosphorylated predominantly on Ser residues. As to expression, expressed in maturation-stage ameloblasts (at protein level). Expressed in all tissues examined and in many cell types, including bone marrow stroma, fibroblast, B-cell precursors, lymphoma and erythroleukemia.

It is found in the cell membrane. The protein resides in the endoplasmic reticulum membrane. The protein localises to the sarcoplasmic reticulum. Its subcellular location is the cytoplasm. It localises to the cytoskeleton. Its function is as follows. Acts as a Ca(2+) sensor that gates two major inward rectifying Ca(2+) channels at the plasma membrane: Ca(2+) release-activated Ca(2+) (CRAC) channels and arachidonate-regulated Ca(2+)-selective (ARC) channels. Plays a role in mediating store-operated Ca(2+) entry (SOCE), a Ca(2+) influx following depletion of intracellular Ca(2+) stores. Upon Ca(2+) depletion, translocates from the endoplasmic reticulum to the plasma membrane where it activates CRAC channel pore-forming subunits ORA1, ORA2 and ORAI3 to generate sustained and oscillatory Ca(2+) entry. Involved in enamel formation. The sequence is that of Stromal interaction molecule 1 (Stim1) from Mus musculus (Mouse).